The primary structure comprises 94 residues: MKSFIVLAVTLCLAAFFMGQSVASPAAAAEESKFVDGLHALKTIEPELHGRYKRATCDLLSGTGINHSACAAHCLLRGNRGGYCNGKAVCVCRN.

The signal sequence occupies residues 1–23 (MKSFIVLAVTLCLAAFFMGQSVA). Positions 24–54 (SPAAAAEESKFVDGLHALKTIEPELHGRYKR) are excised as a propeptide. 3 disulfides stabilise this stretch: Cys-57-Cys-84, Cys-70-Cys-90, and Cys-74-Cys-92.

The protein belongs to the invertebrate defensin family. Type 1 subfamily. As to expression, hemocytes and fat body.

The protein localises to the secreted. Functionally, sapecins, which are potent bactericidal proteins, are produced in response to injury. Sapecin is cytotoxic to Gram-positive bacteria, and to a lesser extent against Gram-negative bacteria. The polypeptide is Sapecin (Sarcophaga peregrina (Flesh fly)).